A 126-amino-acid polypeptide reads, in one-letter code: Topoisomerase I damage affected protein 2 (126 aa).

Residue S2 is modified to N-acetylserine.

It belongs to the TDA2 family.

It is found in the cytoplasm. It localises to the cell projection. The sequence is that of Topoisomerase I damage affected protein 2 (TDA2) from Saccharomyces cerevisiae (strain JAY291) (Baker's yeast).